The chain runs to 361 residues: Ribosomal RNA large subunit methyltransferase M (361 aa).

S-adenosyl-L-methionine is bound by residues Ser-187, 220 to 223 (CPGG), Asp-239, Asp-259, and Asp-276. The active-site Proton acceptor is the Lys-305.

The protein belongs to the class I-like SAM-binding methyltransferase superfamily. RNA methyltransferase RlmE family. RlmM subfamily. As to quaternary structure, monomer.

The protein resides in the cytoplasm. It carries out the reaction cytidine(2498) in 23S rRNA + S-adenosyl-L-methionine = 2'-O-methylcytidine(2498) in 23S rRNA + S-adenosyl-L-homocysteine + H(+). In terms of biological role, catalyzes the 2'-O-methylation at nucleotide C2498 in 23S rRNA. The sequence is that of Ribosomal RNA large subunit methyltransferase M from Shewanella baltica (strain OS223).